A 288-amino-acid chain; its full sequence is Bifunctional protein FolD 2 (288 aa).

NADP(+) contacts are provided by residues 166–168 (GRS) and Ser191.

It belongs to the tetrahydrofolate dehydrogenase/cyclohydrolase family. In terms of assembly, homodimer.

The enzyme catalyses (6R)-5,10-methylene-5,6,7,8-tetrahydrofolate + NADP(+) = (6R)-5,10-methenyltetrahydrofolate + NADPH. It catalyses the reaction (6R)-5,10-methenyltetrahydrofolate + H2O = (6R)-10-formyltetrahydrofolate + H(+). It participates in one-carbon metabolism; tetrahydrofolate interconversion. Functionally, catalyzes the oxidation of 5,10-methylenetetrahydrofolate to 5,10-methenyltetrahydrofolate and then the hydrolysis of 5,10-methenyltetrahydrofolate to 10-formyltetrahydrofolate. In Frankia alni (strain DSM 45986 / CECT 9034 / ACN14a), this protein is Bifunctional protein FolD 2.